Here is a 226-residue protein sequence, read N- to C-terminus: MVKLILMRHGQSQWNLANLFTGWVDIPLSFKGIEEAIEAGKQIKNYPIDLIFTSSLIRAQMTAMLAMSVHTSGKVPVILHTGEGRLEEWASIYSSESQSQTIPVIRAWELNERMYGELQGINKEEMAKKYGAEQVHIWRRSFDVPPPNGESLQMTAARTIPYFENTIVPHLKEKKNIFIAAHGNSLRSIIMKLDGLTTDQVVKLELATGVPVIYDFNHDEYIKQQK.

Substrate-binding positions include 8–15 (RHGQSQWN), 21–22 (TG), R58, 112–115 (ERMY), K123, 139–140 (RR), and 183–184 (GN). The active-site Tele-phosphohistidine intermediate is H9. The Proton donor/acceptor role is filled by E112.

Belongs to the phosphoglycerate mutase family. BPG-dependent PGAM subfamily.

The enzyme catalyses (2R)-2-phosphoglycerate = (2R)-3-phosphoglycerate. It participates in carbohydrate degradation; glycolysis; pyruvate from D-glyceraldehyde 3-phosphate: step 3/5. Catalyzes the interconversion of 2-phosphoglycerate and 3-phosphoglycerate. In Protochlamydia amoebophila (strain UWE25), this protein is 2,3-bisphosphoglycerate-dependent phosphoglycerate mutase.